The sequence spans 224 residues: Cerebellin-2 (224 aa).

The first 51 residues, 1 to 51 (MPAPGQGPRGPLLSMPGRRGALREPADFGSSLGAVLALLLLLLPACCPVRA), serve as a signal peptide directing secretion. Residues Asn-53 and Asn-110 are each glycosylated (N-linked (GlcNAc...) asparagine). The 137-residue stretch at 88 to 224 (SGSAKVAFSA…TFSGFLVFPL (137 aa)) folds into the C1q domain.

As to quaternary structure, homohexamer; disulfide-linked homotrimers. The trimers are assembled via the globular C1q domains. The trimers associate via N-terminal cysteine residues to form disulfide-linked hexamers. May form homooligomers or heterooligomers with CBLN1 and CBLN3 prior to secretion. Once secreted, does not interact with other CBLN family members. Interacts with GRID2, and more weakly with GRID1. Interacts with NRXN1 and NRXN2 long and short isoforms produced by alternative promoter usage. Weakly interacts with NRXN3 short isoform and not at all with NRXN3 long isoform. Expressed in various brain regions with higher levels in the olfactory bulb, cerebral cortex, certain thalamic and hypothalamic nuclei, superior and inferior colliculi and some brainstem nuclei. Highly expressed in the dorsal medial habenula.

Its subcellular location is the secreted. In terms of biological role, acts as a synaptic organizer in specific subsets of neurons in the brain. Essential for long-term maintenance but not establishment of excitatory synapses. Functions as part of a trans-synaptic complex by binding to postsynaptic GRID1 and presynaptic neurexins. This interaction helps regulate the activity of NMDA and AMPA receptors at hippocampal synapses without affecting synapse formation. NRXN1B-CBLN2-GRID1 complex transduce presynaptic signals into postsynaptic NMDAR response. NRXN3B-CBLN2-GRID1 complex transduce presynaptic signals into postsynaptic AMPAR response. The chain is Cerebellin-2 (Cbln2) from Mus musculus (Mouse).